A 184-amino-acid chain; its full sequence is Photosystem I assembly protein Ycf4 (184 aa).

Helical transmembrane passes span 19 to 39 and 57 to 77; these read LSNF…LLVG and FIFF…LFIS.

This sequence belongs to the Ycf4 family.

It is found in the plastid. The protein resides in the chloroplast thylakoid membrane. In terms of biological role, seems to be required for the assembly of the photosystem I complex. This is Photosystem I assembly protein Ycf4 from Jasminum nudiflorum (Winter jasmine).